We begin with the raw amino-acid sequence, 230 residues long: Response regulator MprA (230 aa).

In terms of domain architecture, Response regulatory spans 4–118 (RILVVDDDRA…ELLARMRALL (115 aa)). At Asp-48 the chain carries 4-aspartylphosphate. Positions 129-227 (SMAMRFSDLT…VRGVGYVLRE (99 aa)) form a DNA-binding region, ompR/PhoB-type.

In terms of assembly, monomer. Interaction with each conserved 8-bp repeat requires tandem binding by two protein monomers. In terms of processing, phosphorylated and dephosphorylated by MprB.

The protein resides in the cytoplasm. Member of the two-component regulatory system MprB/MprA which contributes to maintaining a balance among several systems involved in stress resistance and is required for establishment and maintenance of persistent infection in the host. Functions as a transcriptional regulator that recognizes a 19-bp nucleotide motif comprizing two loosely conserved 8-bp direct DNA-binding motif repeats separated by a 3-bp spacer region. MprB/MprA up-regulates expression of mprA and pepD. This Mycobacterium bovis (strain ATCC BAA-935 / AF2122/97) protein is Response regulator MprA (mprA).